A 288-amino-acid polypeptide reads, in one-letter code: Transmembrane and coiled-coil domain-containing protein 5A (288 aa).

A coiled-coil region spans residues 10–189 (KKNIISLNMD…ELETGYLERE (180 aa)). The chain crosses the membrane as a helical span at residues 227–249 (SLLFSTLFFIRLLGYLIFHLSFI).

It belongs to the TMCO5 family. As to expression, only detected in testis (at protein level).

It is found in the endoplasmic reticulum membrane. The protein localises to the nucleus membrane. This Mus musculus (Mouse) protein is Transmembrane and coiled-coil domain-containing protein 5A (Tmco5a).